Reading from the N-terminus, the 211-residue chain is Probable GTP-binding protein EngB (211 aa).

The EngB-type G domain occupies 30–204 (EGFEVAFAGR…YTVLADWMEL (175 aa)). GTP-binding positions include 38–45 (GRSNAGKS), 64–68 (GRTQL), 82–85 (DLPG), 149–152 (TKAD), and 182–185 (LFSA). Mg(2+)-binding residues include Ser-45 and Thr-66.

Belongs to the TRAFAC class TrmE-Era-EngA-EngB-Septin-like GTPase superfamily. EngB GTPase family. The cofactor is Mg(2+).

Its function is as follows. Necessary for normal cell division and for the maintenance of normal septation. This Pseudomonas savastanoi pv. phaseolicola (strain 1448A / Race 6) (Pseudomonas syringae pv. phaseolicola (strain 1448A / Race 6)) protein is Probable GTP-binding protein EngB.